The following is a 393-amino-acid chain: Probable acetyl-CoA acetyltransferase (393 aa).

T2 is a propeptide (removed; alternate). Residue C88 is the Acyl-thioester intermediate of the active site. Catalysis depends on proton acceptor residues H349 and C379.

Belongs to the thiolase-like superfamily. Thiolase family.

The catalysed reaction is 2 acetyl-CoA = acetoacetyl-CoA + CoA. This is Probable acetyl-CoA acetyltransferase (fadA4) from Mycobacterium tuberculosis (strain ATCC 25618 / H37Rv).